The following is a 252-amino-acid chain: MKQTQRHNGIIELVKQQGYVSTEELVEHFSVSPQTIRRDLNELAEQNLILRHHGGAALPSSSVNTPWHDRKATQTEEKERIARKVAEQIPNGSTLFIDIGTTPEAVAHALLNHSNLRIVTNNLNVANTLMVKEDFRIILAGGELRSRDGGIIGEATLDFISQFRLDFGILGISGIDSDGSLLEFDYHEVRTKRAIIENSRHVMLVVDHSKFGRNAMVNMGSISMVDAVYTDAPPPVSVMQVLTDHHIQLELC.

Positions 3-58 (QTQRHNGIIELVKQQGYVSTEELVEHFSVSPQTIRRDLNELAEQNLILRHHGGAAL) constitute an HTH deoR-type domain. Positions 20 to 39 (VSTEELVEHFSVSPQTIRRD) form a DNA-binding region, H-T-H motif.

Repressor of the glycerol-3-phosphate regulon. The chain is Glycerol-3-phosphate regulon repressor (glpR) from Escherichia coli (strain K12).